An 88-amino-acid polypeptide reads, in one-letter code: MSKEDMIELEGVVIEMLPESRFRVRLDNNMEILAYGSGKMKMHRIRVLLGDRVTVEMSPYDLTKGRINFRHPTANPGAGPRPSHHHRR.

Residues Met-1–Pro-72 enclose the S1-like domain. The segment at Arg-66 to Arg-88 is disordered.

It belongs to the IF-1 family. In terms of assembly, component of the 30S ribosomal translation pre-initiation complex which assembles on the 30S ribosome in the order IF-2 and IF-3, IF-1 and N-formylmethionyl-tRNA(fMet); mRNA recruitment can occur at any time during PIC assembly.

It localises to the cytoplasm. Functionally, one of the essential components for the initiation of protein synthesis. Stabilizes the binding of IF-2 and IF-3 on the 30S subunit to which N-formylmethionyl-tRNA(fMet) subsequently binds. Helps modulate mRNA selection, yielding the 30S pre-initiation complex (PIC). Upon addition of the 50S ribosomal subunit IF-1, IF-2 and IF-3 are released leaving the mature 70S translation initiation complex. The sequence is that of Translation initiation factor IF-1 1 from Chromobacterium violaceum (strain ATCC 12472 / DSM 30191 / JCM 1249 / CCUG 213 / NBRC 12614 / NCIMB 9131 / NCTC 9757 / MK).